The following is a 104-amino-acid chain: Large ribosomal subunit protein uL23 (104 aa).

It belongs to the universal ribosomal protein uL23 family. Part of the 50S ribosomal subunit. Contacts protein L29, and trigger factor when it is bound to the ribosome.

Functionally, one of the early assembly proteins it binds 23S rRNA. One of the proteins that surrounds the polypeptide exit tunnel on the outside of the ribosome. Forms the main docking site for trigger factor binding to the ribosome. The sequence is that of Large ribosomal subunit protein uL23 from Ralstonia pickettii (strain 12J).